Here is a 276-residue protein sequence, read N- to C-terminus: NADPH-dependent 7-cyano-7-deazaguanine reductase (276 aa).

Position 83 to 85 (83 to 85) interacts with substrate; it reads IES. 85-86 serves as a coordination point for NADPH; sequence SK. Cys184 functions as the Thioimide intermediate in the catalytic mechanism. Catalysis depends on Asp191, which acts as the Proton donor. Substrate is bound at residue 223–224; it reads HE. 252-253 contacts NADPH; it reads RG.

The protein belongs to the GTP cyclohydrolase I family. QueF type 2 subfamily. In terms of assembly, homodimer.

It localises to the cytoplasm. The catalysed reaction is 7-aminomethyl-7-carbaguanine + 2 NADP(+) = 7-cyano-7-deazaguanine + 2 NADPH + 3 H(+). It functions in the pathway tRNA modification; tRNA-queuosine biosynthesis. Its function is as follows. Catalyzes the NADPH-dependent reduction of 7-cyano-7-deazaguanine (preQ0) to 7-aminomethyl-7-deazaguanine (preQ1). The chain is NADPH-dependent 7-cyano-7-deazaguanine reductase from Pseudomonas putida (strain ATCC 47054 / DSM 6125 / CFBP 8728 / NCIMB 11950 / KT2440).